We begin with the raw amino-acid sequence, 219 residues long: Envelope protein UL45 homolog (219 aa).

Topologically, residues methionine 1 to arginine 57 are intravirion. A helical; Signal-anchor for type II membrane protein membrane pass occupies residues cysteine 58 to valine 78. Residues serine 79–arginine 219 are Virion surface-facing. Residues asparagine 113, asparagine 120, and asparagine 138 are each glycosylated (N-linked (GlcNAc...) asparagine; by host).

Belongs to the herpesviridae HHV-1 UL45 family. Post-translationally, N-glycosylated.

Its subcellular location is the virion membrane. This Equine herpesvirus 1 (strain Ab4p) (EHV-1) protein is Envelope protein UL45 homolog.